The primary structure comprises 455 residues: Exodeoxyribonuclease 7 large subunit (455 aa).

The protein belongs to the XseA family. In terms of assembly, heterooligomer composed of large and small subunits.

The protein localises to the cytoplasm. It catalyses the reaction Exonucleolytic cleavage in either 5'- to 3'- or 3'- to 5'-direction to yield nucleoside 5'-phosphates.. In terms of biological role, bidirectionally degrades single-stranded DNA into large acid-insoluble oligonucleotides, which are then degraded further into small acid-soluble oligonucleotides. In Escherichia coli O7:K1 (strain IAI39 / ExPEC), this protein is Exodeoxyribonuclease 7 large subunit.